Reading from the N-terminus, the 336-residue chain is 3-isopropylmalate dehydrogenase (336 aa).

Substrate-binding residues include arginine 87, arginine 97, arginine 121, and aspartate 211. Residues aspartate 211, aspartate 235, and aspartate 239 each coordinate Mg(2+). An NAD(+)-binding site is contributed by 271 to 283 (GSAPDIAGQGIAD).

The protein belongs to the isocitrate and isopropylmalate dehydrogenases family. LeuB type 2 subfamily. As to quaternary structure, homodimer. Requires Mg(2+) as cofactor. It depends on Mn(2+) as a cofactor.

The protein resides in the cytoplasm. It catalyses the reaction (2R,3S)-3-isopropylmalate + NAD(+) = 4-methyl-2-oxopentanoate + CO2 + NADH. The protein operates within amino-acid biosynthesis; L-leucine biosynthesis; L-leucine from 3-methyl-2-oxobutanoate: step 3/4. In terms of biological role, catalyzes the oxidation of 3-carboxy-2-hydroxy-4-methylpentanoate (3-isopropylmalate) to 3-carboxy-4-methyl-2-oxopentanoate. The product decarboxylates to 4-methyl-2 oxopentanoate. This chain is 3-isopropylmalate dehydrogenase, found in Mycobacterium bovis (strain ATCC BAA-935 / AF2122/97).